The primary structure comprises 379 residues: PqqA peptide cyclase (379 aa).

The 213-residue stretch at 8–220 (LPAPIGLLAE…IRVVEEARER (213 aa)) folds into the Radical SAM core domain. [4Fe-4S] cluster is bound by residues Cys22, Cys26, and Cys29.

It belongs to the radical SAM superfamily. PqqE family. Interacts with PqqD. The interaction is necessary for activity of PqqE. [4Fe-4S] cluster serves as cofactor.

The enzyme catalyses [PQQ precursor protein] + S-adenosyl-L-methionine = E-Y cross-linked-[PQQ precursor protein] + 5'-deoxyadenosine + L-methionine + H(+). It functions in the pathway cofactor biosynthesis; pyrroloquinoline quinone biosynthesis. Functionally, catalyzes the cross-linking of a glutamate residue and a tyrosine residue in the PqqA protein as part of the biosynthesis of pyrroloquinoline quinone (PQQ). In Methylobacterium nodulans (strain LMG 21967 / CNCM I-2342 / ORS 2060), this protein is PqqA peptide cyclase.